The chain runs to 129 residues: Protein Turandot A1 (129 aa).

The signal sequence occupies residues 1–21 (MNSSTALMCFALLLISPLCMG). Asparagine 49 carries N-linked (GlcNAc...) asparagine glycosylation.

The protein belongs to the Turandot family.

It localises to the secreted. A humoral factor that plays a role in stress tolerance; gives increased resistance to the lethal effects of bacterial challenge and stress. Regulated by the JAK/STAT pathway and NF-KB-like Relish pathway in the fat body, upd3 in the hemocytes and Mekk1 in response to septic injury and consequent immune response. The protein is Protein Turandot A1 (TotA1) of Drosophila simulans (Fruit fly).